The primary structure comprises 371 residues: NADH-ubiquinone oxidoreductase chain 1 (371 aa).

Helical transmembrane passes span 7-27 (IISI…VAYV), 44-64 (PNAV…KLLL), 77-97 (LFFL…AVIP), 109-129 (LGIL…LLAG), 153-173 (LVLS…NLGV), 180-200 (AVLF…GSIA), 226-246 (AVVF…MCIL), 263-283 (VFNI…NWMV), 302-322 (GWLY…IFIL), and 338-358 (FCWT…PCIL).

It belongs to the complex I subunit 1 family.

The protein localises to the mitochondrion inner membrane. The catalysed reaction is a ubiquinone + NADH + 5 H(+)(in) = a ubiquinol + NAD(+) + 4 H(+)(out). Functionally, core subunit of the mitochondrial membrane respiratory chain NADH dehydrogenase (Complex I) that is believed to belong to the minimal assembly required for catalysis. Complex I functions in the transfer of electrons from NADH to the respiratory chain. The immediate electron acceptor for the enzyme is believed to be ubiquinone. The polypeptide is NADH-ubiquinone oxidoreductase chain 1 (ndh-1) (Neurospora crassa (strain ATCC 24698 / 74-OR23-1A / CBS 708.71 / DSM 1257 / FGSC 987)).